A 242-amino-acid polypeptide reads, in one-letter code: Glycerol-3-phosphate acyltransferase (242 aa).

A run of 6 helical transmembrane segments spans residues 7–27 (ISLLVILSLLIGYLFGSIMFA), 61–81 (IAIGFFEIIKSVIPFSIILLI), 102–122 (YYLTYLAPLAAIFGHMYPVYF), 135–155 (GFVFVVSPWWFLIIALTWWTI), 162–182 (VSLASIVCFIIFLFLPYIPWL), and 201–221 (DWYIIVFFAIANTILSTIIIW).

The protein belongs to the PlsY family. As to quaternary structure, probably interacts with PlsX.

It is found in the cell membrane. It carries out the reaction an acyl phosphate + sn-glycerol 3-phosphate = a 1-acyl-sn-glycero-3-phosphate + phosphate. Its pathway is lipid metabolism; phospholipid metabolism. Functionally, catalyzes the transfer of an acyl group from acyl-phosphate (acyl-PO(4)) to glycerol-3-phosphate (G3P) to form lysophosphatidic acid (LPA). This enzyme utilizes acyl-phosphate as fatty acyl donor, but not acyl-CoA or acyl-ACP. The chain is Glycerol-3-phosphate acyltransferase from Mycoplasmoides gallisepticum (strain R(low / passage 15 / clone 2)) (Mycoplasma gallisepticum).